The primary structure comprises 888 residues: Isoleucine--tRNA ligase (888 aa).

A 'HIGH' region motif is present at residues 61-71; it reads PYANGSIHIGH. An L-isoleucyl-5'-AMP-binding site is contributed by Glu-551. A 'KMSKS' region motif is present at residues 592–596; the sequence is KMSKQ. ATP is bound at residue Lys-595. 4 residues coordinate Zn(2+): Cys-862, Cys-865, Cys-879, and Cys-882.

Belongs to the class-I aminoacyl-tRNA synthetase family. IleS type 1 subfamily. As to quaternary structure, monomer. Zn(2+) serves as cofactor.

The protein localises to the cytoplasm. It carries out the reaction tRNA(Ile) + L-isoleucine + ATP = L-isoleucyl-tRNA(Ile) + AMP + diphosphate. Its function is as follows. Catalyzes the attachment of isoleucine to tRNA(Ile). As IleRS can inadvertently accommodate and process structurally similar amino acids such as valine, to avoid such errors it has two additional distinct tRNA(Ile)-dependent editing activities. One activity is designated as 'pretransfer' editing and involves the hydrolysis of activated Val-AMP. The other activity is designated 'posttransfer' editing and involves deacylation of mischarged Val-tRNA(Ile). The chain is Isoleucine--tRNA ligase from Mycoplasmopsis pulmonis (strain UAB CTIP) (Mycoplasma pulmonis).